A 103-amino-acid chain; its full sequence is Large ribosomal subunit protein bL21 (103 aa).

The protein belongs to the bacterial ribosomal protein bL21 family. Part of the 50S ribosomal subunit. Contacts protein L20.

This protein binds to 23S rRNA in the presence of protein L20. In Vibrio parahaemolyticus serotype O3:K6 (strain RIMD 2210633), this protein is Large ribosomal subunit protein bL21.